We begin with the raw amino-acid sequence, 270 residues long: Checkpoint signal transducer rad25 (270 aa).

Phosphoserine occurs at positions 234 and 253. Residues 240 to 270 form a disordered region; that stretch reads QSAKEEAPAAAAASENEHPEPKESTTDTVKA. Over residues 254–270 the composition is skewed to basic and acidic residues; sequence ENEHPEPKESTTDTVKA.

Belongs to the 14-3-3 family. In terms of assembly, interacts with rad24. Interacts with byr2.

The protein localises to the cytoplasm. Acts in cell cycle and stress checkpoint signaling by sequestering signal transducers regulated by the checkpoints. Required for the DNA damage checkpoint that ensures that DNA damage is repaired before mitosis is attempted. Sequesters byr2 in the cytoplasm to prevent its translocation to the plasma membrane. The sequence is that of Checkpoint signal transducer rad25 from Schizosaccharomyces pombe (strain 972 / ATCC 24843) (Fission yeast).